The following is a 1036-amino-acid chain: MDNEDKVSFPAKEEKVLTFWKEQNIFQKTLENRDGSPTFSFYDGPPFATGLPHYGHLLAGTIKDVVCRYATMDGHYVPRRFGWDCHGVPVEYEVEKSLGLTEPGAIDRFGIANFNEECRKIVFRYVDEWKYFVDRIGRWVDFSATWKTMDLSFMESVWWVFHSLYKQGLVYEGTKVVPFSTKLGTPLSNFEAGQNYKEVDDPSVVAKFALQDDQGILLAWTTTPWTLVSNMALAVHPGLTYVRIQDKESGEEYILGQESLARWFPDRESYKWIGQLSGESLVGRRYCPLFPYFQDQQDRGAFRVIPADFIEESEGTGVVHMAPAFGEADFFACQEHNVPLVCPVDNQGCFTSEVTDFVGEYIKFADKGIARRLKNENKLFYQGTIRHRYPFCWRTDSPLIYKAVNSWFVSVEKVKHKMLKANESIHWTPGHIKHGRFGKWLEGARDWAISRNRYWGTPIPIWRSEDGELLVIRSIQELEELSGQKIVDLHRHFIDEIVIHKNGKSFHRIPYVFDCWFDSGAMPYAQNHYPFERAEETEARFPADFIAEGLDQTRGWFYTLTVIAAALFDQPAFKNVIVNGIVLAEDGNKMSKRLNNYPSPKKIMDTYGADALRLYLLNSVVVKAEDLRFSDKGVEAVLKQVLLPLSNALAFYKTYAELYGFSPNETTDLELAEIDRWILSSLYSLVGKTRENMAQYDLHAAVSPFIDFIEDLTNWYIRRSRRRFWESEDSPDRRAAFATLYEVLMVFSKIIAPFIPFTAEDMYQQLRVETDPESVHLCDFPHVVLEKILPDLEKKMQDIREIVALGHSLRKEHKLKVRQPLQHMYIVGAKERMAALAQVDSLIGEELNVKEVHFCSETPEYVTTLVKPNFRSLGKRVGNRLPEIQKALAGLSQEQIQAFMHNGFMVLSLGEETISLNEEDITVSWEAAPGFVARSSASFVAILDCQLTSPLIMEGIAREIVNKINTMRRNGKLHVSDRIAIRLHAPKIVQEAFSQYEEYICEETLTTSVSFIDDKEGEEWDVNGHAVSLSLEVIGH.

A 'HIGH' region motif is present at residues 46 to 56 (PFATGLPHYGH). Residues 589–593 (KMSKR) carry the 'KMSKS' region motif. Residue K592 participates in ATP binding.

This sequence belongs to the class-I aminoacyl-tRNA synthetase family. IleS type 2 subfamily. In terms of assembly, monomer. Zn(2+) is required as a cofactor.

It localises to the cytoplasm. The enzyme catalyses tRNA(Ile) + L-isoleucine + ATP = L-isoleucyl-tRNA(Ile) + AMP + diphosphate. In terms of biological role, catalyzes the attachment of isoleucine to tRNA(Ile). As IleRS can inadvertently accommodate and process structurally similar amino acids such as valine, to avoid such errors it has two additional distinct tRNA(Ile)-dependent editing activities. One activity is designated as 'pretransfer' editing and involves the hydrolysis of activated Val-AMP. The other activity is designated 'posttransfer' editing and involves deacylation of mischarged Val-tRNA(Ile). The polypeptide is Isoleucine--tRNA ligase (Chlamydia muridarum (strain MoPn / Nigg)).